We begin with the raw amino-acid sequence, 231 residues long: NADH-ubiquinone oxidoreductase chain 4 (231 aa).

The next 6 helical transmembrane spans lie at 1–21 (PIAG…YGII), 34–54 (VFLP…LTCL), 61–80 (SLIA…AIMI), 84–106 (WGLS…LFCL), 118–138 (ILIL…WWLL), and 169–189 (TIIL…HMFL).

Belongs to the complex I subunit 4 family.

It is found in the mitochondrion membrane. The catalysed reaction is a ubiquinone + NADH + 5 H(+)(in) = a ubiquinol + NAD(+) + 4 H(+)(out). Core subunit of the mitochondrial membrane respiratory chain NADH dehydrogenase (Complex I) that is believed to belong to the minimal assembly required for catalysis. Complex I functions in the transfer of electrons from NADH to the respiratory chain. The immediate electron acceptor for the enzyme is believed to be ubiquinone. In Porthidium nasutum (Hognosed pitviper), this protein is NADH-ubiquinone oxidoreductase chain 4 (MT-ND4).